We begin with the raw amino-acid sequence, 322 residues long: Nuclease 1, mitochondrial (322 aa).

His-142 serves as the catalytic Proton acceptor. Mg(2+) is bound at residue Asn-174.

The protein belongs to the DNA/RNA non-specific endonuclease family. In terms of assembly, homodimer. It depends on Mn(2+) as a cofactor. Mg(2+) serves as cofactor.

It is found in the mitochondrion inner membrane. This enzyme has both RNase and DNase activity. It degrades single-stranded DNA and RNA. This Schizosaccharomyces pombe (strain 972 / ATCC 24843) (Fission yeast) protein is Nuclease 1, mitochondrial (pnu1).